A 135-amino-acid chain; its full sequence is MRNMMSLCWQYLRAFTIIYLCLWAGKALALLLPIVIPGSIIGMLILFVLLTLQILPSPWVKPSCQLLIRYMALLFVPIGVGVMQYYEQLTKQFGPIVVSCFISTLIVMLVVAYSSHYVHRDRKVISPSTPTEGEK.

3 helical membrane passes run 30–50 (LLLP…FVLL), 66–86 (LLIR…MQYY), and 93–113 (FGPI…VVAY).

It belongs to the UPF0299 family.

Its subcellular location is the cell inner membrane. The protein is UPF0299 membrane protein YPK_2559 of Yersinia pseudotuberculosis serotype O:3 (strain YPIII).